The sequence spans 407 residues: Phosphopentomutase (407 aa).

Residues Asp-10, Asp-306, His-311, Asp-347, His-348, and His-359 each coordinate Mn(2+).

The protein belongs to the phosphopentomutase family. Mn(2+) is required as a cofactor.

It localises to the cytoplasm. The enzyme catalyses 2-deoxy-alpha-D-ribose 1-phosphate = 2-deoxy-D-ribose 5-phosphate. The catalysed reaction is alpha-D-ribose 1-phosphate = D-ribose 5-phosphate. The protein operates within carbohydrate degradation; 2-deoxy-D-ribose 1-phosphate degradation; D-glyceraldehyde 3-phosphate and acetaldehyde from 2-deoxy-alpha-D-ribose 1-phosphate: step 1/2. In terms of biological role, isomerase that catalyzes the conversion of deoxy-ribose 1-phosphate (dRib-1-P) and ribose 1-phosphate (Rib-1-P) to deoxy-ribose 5-phosphate (dRib-5-P) and ribose 5-phosphate (Rib-5-P), respectively. The chain is Phosphopentomutase from Escherichia coli O127:H6 (strain E2348/69 / EPEC).